The primary structure comprises 442 residues: tRNA modification GTPase MnmE (442 aa).

(6S)-5-formyl-5,6,7,8-tetrahydrofolate contacts are provided by Arg24, Glu82, and Lys120. The TrmE-type G domain occupies 217–367 (GLHIVITGEP…LISLIKKKAE (151 aa)). Residues 227 to 232 (NVGKST), 246 to 252 (SEYAGTT), and 271 to 274 (DTAG) each bind GTP. Ser231 contacts Mg(2+). Ser246 provides a ligand contact to K(+). Thr252 provides a ligand contact to Mg(2+). Position 442 (Lys442) interacts with (6S)-5-formyl-5,6,7,8-tetrahydrofolate.

It belongs to the TRAFAC class TrmE-Era-EngA-EngB-Septin-like GTPase superfamily. TrmE GTPase family. In terms of assembly, homodimer. Heterotetramer of two MnmE and two MnmG subunits. K(+) serves as cofactor.

The protein resides in the cytoplasm. Exhibits a very high intrinsic GTPase hydrolysis rate. Involved in the addition of a carboxymethylaminomethyl (cmnm) group at the wobble position (U34) of certain tRNAs, forming tRNA-cmnm(5)s(2)U34. This chain is tRNA modification GTPase MnmE, found in Wolbachia pipientis subsp. Culex pipiens (strain wPip).